A 311-amino-acid polypeptide reads, in one-letter code: Fluoride export protein 1 (311 aa).

Residues 1–6 (MLLTQS) are Cytoplasmic-facing. Residues 7-25 (YFCIMSMLGTLARLGLTAL) traverse the membrane as a helical segment. At 26-29 (NTYP) the chain is on the extracellular side. The chain crosses the membrane as a helical span at residues 30 to 50 (GAPFSGLLWVQFVGCVIMGFC). Topologically, residues 51–65 (QTESVFFPRPKHNAT) are cytoplasmic. A helical membrane pass occupies residues 66 to 86 (FLLAITTGFCGSLTTFSSWML). Over 87–106 (QMFTGMANLDPFERRGRGYS) the chain is Extracellular. The chain crosses the membrane as a helical span at residues 107-127 (FLSVVSDFMVTMCIAMSSLIW). Residues 128–154 (GKQIGKTTGQWRIGKVAFAWPIPAHTH) are Cytoplasmic-facing. A helical membrane pass occupies residues 155-175 (IVVRVLLLLLSICFFVGAAFY). Residues 176–186 (TAYTTNVTHRG) lie on the Extracellular side of the membrane. N181 carries N-linked (GlcNAc...) asparagine glycosylation. The helical transmembrane segment at 187–207 (IGFSLIFSPFAALTRLYLARF) threads the bilayer. The Cytoplasmic portion of the chain corresponds to 208 to 212 (LNSPQ). A helical membrane pass occupies residues 213–233 (YFIPYGTLCANVFATLLLSIM). The Extracellular portion of the chain corresponds to 234-250 (YMIPQITHCTPVSRSVM). The helical transmembrane segment at 251-268 (YGIQNGFCAVLSTLSTFS) threads the bilayer. The Cytoplasmic portion of the chain corresponds to 269 to 278 (NELHTMPIKR). Residues 279–299 (AYIYCIISVAISFSICVIVDG) form a helical membrane-spanning segment. Residues 300–311 (ATAWGHGYTEKY) lie on the Extracellular side of the membrane.

The protein belongs to the fluoride channel Fluc/FEX (TC 1.A.43) family.

It localises to the cell membrane. The enzyme catalyses fluoride(in) = fluoride(out). In terms of biological role, fluoride channel required for the rapid expulsion of cytoplasmic fluoride. The protein is Fluoride export protein 1 (fex1) of Schizosaccharomyces pombe (strain 972 / ATCC 24843) (Fission yeast).